Here is a 396-residue protein sequence, read N- to C-terminus: MAVRIKLKPGREKSLERRHPWVFSNGIHNVKGKLEAGDTVDVVAHDGHWLGRGAWSPESQIQVRIWTFDREEEIDREFFKRRILRAQAGRDDLIREQGLTGYRLIAAESDGLPGITIDKYANVLVCQLLSMGADVWRDTIVDVLAELYPDCAIYERSDVDSRKKEGLASTMGLLHGTLPEMPVIIEENGIKIAVDVTKGHKTGFYLDQRDNRAMAARFVKGKSVLNCFCYTGTFGLYAAKAGAASIENVDVSALALDTARLNMRVNGLNDDNVHYNEADVFKLLRQYRDEGKTFDVIVLDPPKFADNKSQLNGACRGYKDINMIALQLLNPGGVLLTFSCSGLMPADLFQKIVADAALDAKREIQFIERLSQASDHPIGSAFPEGFYLKGLVARVW.

In terms of domain architecture, PUA spans Ala2–Phe79.

It belongs to the methyltransferase superfamily. RlmI family.

It localises to the cytoplasm. It carries out the reaction cytidine(1962) in 23S rRNA + S-adenosyl-L-methionine = 5-methylcytidine(1962) in 23S rRNA + S-adenosyl-L-homocysteine + H(+). In terms of biological role, specifically methylates the cytosine at position 1962 (m5C1962) of 23S rRNA. In Shewanella sp. (strain MR-4), this protein is Ribosomal RNA large subunit methyltransferase I.